The following is a 316-amino-acid chain: Ribosomal RNA small subunit methyltransferase H (316 aa).

Residues 35-37 (SGH), Asp55, Phe84, Asp105, and Gln112 each bind S-adenosyl-L-methionine.

It belongs to the methyltransferase superfamily. RsmH family.

The protein resides in the cytoplasm. The catalysed reaction is cytidine(1402) in 16S rRNA + S-adenosyl-L-methionine = N(4)-methylcytidine(1402) in 16S rRNA + S-adenosyl-L-homocysteine + H(+). Specifically methylates the N4 position of cytidine in position 1402 (C1402) of 16S rRNA. The chain is Ribosomal RNA small subunit methyltransferase H from Streptococcus pyogenes serotype M49 (strain NZ131).